The following is a 211-amino-acid chain: Cytochrome c biogenesis ATP-binding export protein CcmA 2 (211 aa).

The 203-residue stretch at 6–208 (LEARELGVRR…GAVLDLATDA (203 aa)) folds into the ABC transporter domain. 38 to 45 (GPNGAGKT) is an ATP binding site.

This sequence belongs to the ABC transporter superfamily. CcmA exporter (TC 3.A.1.107) family. As to quaternary structure, the complex is composed of two ATP-binding proteins (CcmA) and two transmembrane proteins (CcmB).

It is found in the cell inner membrane. The catalysed reaction is heme b(in) + ATP + H2O = heme b(out) + ADP + phosphate + H(+). Its function is as follows. Part of the ABC transporter complex CcmAB involved in the biogenesis of c-type cytochromes; once thought to export heme, this seems not to be the case, but its exact role is uncertain. Responsible for energy coupling to the transport system. The chain is Cytochrome c biogenesis ATP-binding export protein CcmA 2 from Cupriavidus metallidurans (strain ATCC 43123 / DSM 2839 / NBRC 102507 / CH34) (Ralstonia metallidurans).